The primary structure comprises 268 residues: MSSSGSDKERETFVYMAKLSEQAERYDEMVETMKKVARVNSELTVEERNLLSVGYKNVIGARRASWRIMSSIEQKEESKGNESNVKQIKGYRQKVEDELANICQDILTIIDQHLIPHATSGEATVFYYKMKGDYYRYLAEFKTEQERKEAAEQSLKGYEAATQAASTELPSTHPIRLGLALNFSVFYYEIMNSPERACHLAKQAFDEAIAELDTLSEESYKDSTLIMQLLRDNLTLWTSDLPEDGGEDNIKTEESKQEQAKPADATEN.

Serine 70 and serine 193 each carry phosphoserine. Threonine 214 carries the post-translational modification Phosphothreonine. The interval 240–268 (DLPEDGGEDNIKTEESKQEQAKPADATEN) is disordered. Positions 248–261 (DNIKTEESKQEQAK) are enriched in basic and acidic residues.

The protein belongs to the 14-3-3 family. As to expression, expressed in flowers.

Its subcellular location is the nucleus. The protein localises to the cytoplasm. Functionally, is associated with a DNA binding complex that binds to the G box, a well-characterized cis-acting DNA regulatory element found in plant genes. The sequence is that of 14-3-3-like protein GF14 iota from Arabidopsis thaliana (Mouse-ear cress).